The following is a 217-amino-acid chain: UPF0502 protein VFMJ11_A0613 (217 aa).

This sequence belongs to the UPF0502 family.

The polypeptide is UPF0502 protein VFMJ11_A0613 (Aliivibrio fischeri (strain MJ11) (Vibrio fischeri)).